The following is a 251-amino-acid chain: MSEETPKSTHFGYKTVEAEQKADMVAGVFHSVAAKYDIMNDVMSFGIHRMWKRFTIESAGARPGMKVLDLAGGTGDLTAKFSHIVGEKGQVTLADINDSMLKVGREKLRDKGIVGNVNYVQANAEALPFPDNHFDIITIAFGLRNVTDKDAAIASMLRVLKPGGKLLILEFSKPKHDIMRKVYDLYSFKVMPKMGALITQDADSYEYLAESIRMHPDQETLKQMMVDAGFEQVNYTNMTDGIVALHKGYKF.

Residues Thr-74, Asp-95, and 123–124 each bind S-adenosyl-L-methionine; that span reads NA.

This sequence belongs to the class I-like SAM-binding methyltransferase superfamily. MenG/UbiE family.

It catalyses the reaction a 2-demethylmenaquinol + S-adenosyl-L-methionine = a menaquinol + S-adenosyl-L-homocysteine + H(+). The enzyme catalyses a 2-methoxy-6-(all-trans-polyprenyl)benzene-1,4-diol + S-adenosyl-L-methionine = a 5-methoxy-2-methyl-3-(all-trans-polyprenyl)benzene-1,4-diol + S-adenosyl-L-homocysteine + H(+). The protein operates within quinol/quinone metabolism; menaquinone biosynthesis; menaquinol from 1,4-dihydroxy-2-naphthoate: step 2/2. It functions in the pathway cofactor biosynthesis; ubiquinone biosynthesis. Functionally, methyltransferase required for the conversion of demethylmenaquinol (DMKH2) to menaquinol (MKH2) and the conversion of 2-polyprenyl-6-methoxy-1,4-benzoquinol (DDMQH2) to 2-polyprenyl-3-methyl-6-methoxy-1,4-benzoquinol (DMQH2). This Shewanella piezotolerans (strain WP3 / JCM 13877) protein is Ubiquinone/menaquinone biosynthesis C-methyltransferase UbiE.